The chain runs to 296 residues: Probable 6-phosphogluconolactonase 1 (296 aa).

The protein belongs to the glucosamine/galactosamine-6-phosphate isomerase family. 6-phosphogluconolactonase subfamily.

It carries out the reaction 6-phospho-D-glucono-1,5-lactone + H2O = 6-phospho-D-gluconate + H(+). Its pathway is carbohydrate degradation; pentose phosphate pathway; D-ribulose 5-phosphate from D-glucose 6-phosphate (oxidative stage): step 2/3. Hydrolysis of 6-phosphogluconolactone to 6-phosphogluconate. The sequence is that of Probable 6-phosphogluconolactonase 1 from Oryza sativa subsp. japonica (Rice).